A 338-amino-acid polypeptide reads, in one-letter code: Tryptophan--tRNA ligase (338 aa).

Residues Q12–T14 and G20–N21 each bind ATP. Residues P13–N21 carry the 'HIGH' region motif. Residue D136 participates in L-tryptophan binding. ATP is bound by residues G148–D150, I191, and K200–S204. The 'KMSKS' region motif lies at K200–S204.

Belongs to the class-I aminoacyl-tRNA synthetase family. Homodimer.

Its subcellular location is the cytoplasm. It catalyses the reaction tRNA(Trp) + L-tryptophan + ATP = L-tryptophyl-tRNA(Trp) + AMP + diphosphate + H(+). In terms of biological role, catalyzes the attachment of tryptophan to tRNA(Trp). This is Tryptophan--tRNA ligase from Prochlorococcus marinus subsp. pastoris (strain CCMP1986 / NIES-2087 / MED4).